The chain runs to 327 residues: ATP-dependent 6-phosphofructokinase (327 aa).

ATP contacts are provided by residues glycine 12, arginine 73–leucine 74, and glycine 103–serine 106. Aspartate 104 is a binding site for Mg(2+). Threonine 126–aspartate 128 contributes to the substrate binding site. The active-site Proton acceptor is the aspartate 128. Arginine 155 is a binding site for ADP. Substrate contacts are provided by residues arginine 163 and methionine 170–histidine 172. Residues glycine 186–aspartate 188 and lysine 214–serine 216 contribute to the ADP site. Residues glutamate 223, arginine 245, and histidine 251 to arginine 254 each bind substrate.

Belongs to the phosphofructokinase type A (PFKA) family. ATP-dependent PFK group I subfamily. Prokaryotic clade 'B1' sub-subfamily. Homotetramer. Requires Mg(2+) as cofactor.

The protein localises to the cytoplasm. The enzyme catalyses beta-D-fructose 6-phosphate + ATP = beta-D-fructose 1,6-bisphosphate + ADP + H(+). Its pathway is carbohydrate degradation; glycolysis; D-glyceraldehyde 3-phosphate and glycerone phosphate from D-glucose: step 3/4. With respect to regulation, allosterically activated by ADP and other diphosphonucleosides, and allosterically inhibited by phosphoenolpyruvate. Its function is as follows. Catalyzes the phosphorylation of D-fructose 6-phosphate to fructose 1,6-bisphosphate by ATP, the first committing step of glycolysis. The polypeptide is ATP-dependent 6-phosphofructokinase (Spiroplasma citri).